The chain runs to 274 residues: Non-heme haloperoxidase (274 aa).

In terms of domain architecture, AB hydrolase-1 spans 22–254 (PIMFHHGWPL…RLKVYPGLSH (233 aa)). Residues serine 95, aspartate 225, and histidine 254 contribute to the active site.

It belongs to the AB hydrolase superfamily. Bacterial non-heme haloperoxidase / perhydrolase family.

The sequence is that of Non-heme haloperoxidase (thcF) from Rhodococcus erythropolis (Arthrobacter picolinophilus).